A 218-amino-acid polypeptide reads, in one-letter code: Glutathione S-transferase (218 aa).

Residues 2–88 form the GST N-terminal domain; sequence PVTLGYWDIR…YIARKHDLCG (87 aa). Glutathione is bound by residues 7-8, 46-50, 59-60, and 72-73; these read YW, WLNEK, NL, and QS. In terms of domain architecture, GST C-terminal spans 90–208; that stretch reads TEEERIQLDI…KSSRFSCKQI (119 aa). Residue Tyr-116 participates in substrate binding.

It belongs to the GST superfamily. Mu family. Homodimer.

It localises to the cytoplasm. It catalyses the reaction RX + glutathione = an S-substituted glutathione + a halide anion + H(+). Its function is as follows. Conjugation of reduced glutathione to a wide number of exogenous and endogenous hydrophobic electrophiles. The polypeptide is Glutathione S-transferase (Mesocricetus auratus (Golden hamster)).